The chain runs to 129 residues: Large ribosomal subunit protein bL19 (129 aa).

Belongs to the bacterial ribosomal protein bL19 family.

Functionally, this protein is located at the 30S-50S ribosomal subunit interface and may play a role in the structure and function of the aminoacyl-tRNA binding site. This Methylobacillus flagellatus (strain ATCC 51484 / DSM 6875 / VKM B-1610 / KT) protein is Large ribosomal subunit protein bL19.